The primary structure comprises 183 residues: Globin-like protein 26 (183 aa).

Positions 1-25 (MGSSTSTPAPPPKKNKPEGRKADNQ) are disordered. G2 carries the N-myristoyl glycine lipid modification. The Nuclear localization signal signature appears at 12–18 (PKKNKPE). Residues 26–166 (ILNSYQKSIV…VVDQLRFGYS (141 aa)) form the Globin domain. Positions 77 and 109 each coordinate heme.

This sequence belongs to the globin family. Homodimer. Occurs in an equilibrium of monomeric and dimeric forms in solution. As to expression, detected in the head mesodermal cell. In the tail region, detected in the stomatointestinal and anal depressor muscle cells.

It is found in the cytoplasm. The protein resides in the nucleus lamina. Its subcellular location is the cell membrane. Functionally, plays a role in electron transport. Utilizes the bis-histidyl hexacoordinated complex with iron to transfer electrons to cytochrome c and molecular oxygen. Plays a regulatory role in the periodicity of the defecation cycle under oxidative stress conditions. Not involved in imparting protection against general conditions of oxidative stress. May participate in redox reactions under anaerobic conditions. The polypeptide is Globin-like protein 26 (Caenorhabditis elegans).